A 172-amino-acid polypeptide reads, in one-letter code: 3-hydroxydecanoyl-[acyl-carrier-protein] dehydratase (172 aa).

Residue histidine 71 is part of the active site.

This sequence belongs to the thioester dehydratase family. FabA subfamily. In terms of assembly, homodimer.

Its subcellular location is the cytoplasm. It catalyses the reaction a (3R)-hydroxyacyl-[ACP] = a (2E)-enoyl-[ACP] + H2O. The enzyme catalyses (3R)-hydroxydecanoyl-[ACP] = (2E)-decenoyl-[ACP] + H2O. It carries out the reaction (2E)-decenoyl-[ACP] = (3Z)-decenoyl-[ACP]. It functions in the pathway lipid metabolism; fatty acid biosynthesis. Necessary for the introduction of cis unsaturation into fatty acids. Catalyzes the dehydration of (3R)-3-hydroxydecanoyl-ACP to E-(2)-decenoyl-ACP and then its isomerization to Z-(3)-decenoyl-ACP. Can catalyze the dehydratase reaction for beta-hydroxyacyl-ACPs with saturated chain lengths up to 16:0, being most active on intermediate chain length. The sequence is that of 3-hydroxydecanoyl-[acyl-carrier-protein] dehydratase from Brucella abortus (strain S19).